A 168-amino-acid polypeptide reads, in one-letter code: Ribosome maturation factor RimM (168 aa).

The 73-residue stretch at 96-168 folds into the PRC barrel domain; sequence EGDYYWTDLI…IIVVEWDADF (73 aa).

It belongs to the RimM family. As to quaternary structure, binds ribosomal protein uS19.

It is found in the cytoplasm. Functionally, an accessory protein needed during the final step in the assembly of 30S ribosomal subunit, possibly for assembly of the head region. Essential for efficient processing of 16S rRNA. May be needed both before and after RbfA during the maturation of 16S rRNA. It has affinity for free ribosomal 30S subunits but not for 70S ribosomes. The polypeptide is Ribosome maturation factor RimM (Coxiella burnetii (strain RSA 331 / Henzerling II)).